Here is a 151-residue protein sequence, read N- to C-terminus: Large ribosomal subunit protein bL9 (151 aa).

It belongs to the bacterial ribosomal protein bL9 family.

In terms of biological role, binds to the 23S rRNA. The sequence is that of Large ribosomal subunit protein bL9 from Lactobacillus johnsonii (strain CNCM I-12250 / La1 / NCC 533).